The chain runs to 491 residues: Glutamyl-tRNA(Gln) amidotransferase subunit A (491 aa).

Residues lysine 78 and serine 158 each act as charge relay system in the active site. Serine 182 (acyl-ester intermediate) is an active-site residue.

Belongs to the amidase family. GatA subfamily. Heterotrimer of A, B and C subunits.

The enzyme catalyses L-glutamyl-tRNA(Gln) + L-glutamine + ATP + H2O = L-glutaminyl-tRNA(Gln) + L-glutamate + ADP + phosphate + H(+). Its function is as follows. Allows the formation of correctly charged Gln-tRNA(Gln) through the transamidation of misacylated Glu-tRNA(Gln) in organisms which lack glutaminyl-tRNA synthetase. The reaction takes place in the presence of glutamine and ATP through an activated gamma-phospho-Glu-tRNA(Gln). This Bradyrhizobium sp. (strain BTAi1 / ATCC BAA-1182) protein is Glutamyl-tRNA(Gln) amidotransferase subunit A.